The chain runs to 338 residues: Ferredoxin--NADP reductase (338 aa).

FAD-binding residues include aspartate 32, glutamine 40, tyrosine 45, valine 85, phenylalanine 120, aspartate 287, and threonine 327.

This sequence belongs to the ferredoxin--NADP reductase type 2 family. Homodimer. FAD serves as cofactor.

The catalysed reaction is 2 reduced [2Fe-2S]-[ferredoxin] + NADP(+) + H(+) = 2 oxidized [2Fe-2S]-[ferredoxin] + NADPH. This chain is Ferredoxin--NADP reductase, found in Wolbachia pipientis wMel.